A 283-amino-acid polypeptide reads, in one-letter code: Bifunctional protein FolD (283 aa).

NADP(+) contacts are provided by residues 157–159 and isoleucine 224; that span reads GNG.

It belongs to the tetrahydrofolate dehydrogenase/cyclohydrolase family. In terms of assembly, homodimer.

It carries out the reaction (6R)-5,10-methylene-5,6,7,8-tetrahydrofolate + NADP(+) = (6R)-5,10-methenyltetrahydrofolate + NADPH. The enzyme catalyses (6R)-5,10-methenyltetrahydrofolate + H2O = (6R)-10-formyltetrahydrofolate + H(+). It participates in one-carbon metabolism; tetrahydrofolate interconversion. Its function is as follows. Catalyzes the oxidation of 5,10-methylenetetrahydrofolate to 5,10-methenyltetrahydrofolate and then the hydrolysis of 5,10-methenyltetrahydrofolate to 10-formyltetrahydrofolate. The chain is Bifunctional protein FolD from Mycoplasmoides gallisepticum (strain R(low / passage 15 / clone 2)) (Mycoplasma gallisepticum).